The chain runs to 409 residues: Pectin acetylesterase 4 (409 aa).

A signal peptide spans 1-32 (MVIRSLLQCRTWSKSDWLLASIGIVLIVYSFS). N-linked (GlcNAc...) asparagine glycosylation is found at Asn-36 and Asn-163. Residues Ser-199, Asp-295, and His-362 each act as charge relay system in the active site. 2 N-linked (GlcNAc...) asparagine glycosylation sites follow: Asn-379 and Asn-406.

Belongs to the pectinacetylesterase family.

The protein resides in the secreted. Its subcellular location is the cell wall. In terms of biological role, hydrolyzes acetyl esters in homogalacturonan regions of pectin. In type I primary cell wall, galacturonic acid residues of pectin can be acetylated at the O-2 and O-3 positions. Decreasing the degree of acetylation of pectin gels in vitro alters their physical properties. The chain is Pectin acetylesterase 4 from Arabidopsis thaliana (Mouse-ear cress).